Reading from the N-terminus, the 291-residue chain is MASKSKQHLRYQPRKSVSRSTQAFTVLILLLVVILILLGLGILSLPNANRNSSKTNDLTNIVRKSETSSGDEEGNGERWVEVISWEPRAVVYHNFLTNEECEHLISLAKPSMVKSTVVDEKTGGSKDSRVRTSSGTFLRRGHDEVVEVIEKRISDFTFIPVENGEGLQVLHYQVGQKYEPHYDYFLDEFNTKNGGQRIATVLMYLSDVDDGGETVFPAARGNISAVPWWNELSKCGKEGLSVLPKKRDALLFWNMRPDASLDPSSLHGGCPVVKGNKWSSTKWFHVHEFKV.

At 1 to 22 (MASKSKQHLRYQPRKSVSRSTQ) the chain is on the cytoplasmic side. The helical; Signal-anchor for type II membrane protein transmembrane segment at 23-43 (AFTVLILLLVVILILLGLGIL) threads the bilayer. Residues 44–291 (SLPNANRNSS…KWFHVHEFKV (248 aa)) lie on the Extracellular side of the membrane. N-linked (GlcNAc...) asparagine glycosylation occurs at asparagine 51. The 124-residue stretch at 163–286 (NGEGLQVLHY…KWSSTKWFHV (124 aa)) folds into the Fe2OG dioxygenase domain. Fe cation contacts are provided by histidine 181 and aspartate 183. Asparagine 222 carries N-linked (GlcNAc...) asparagine glycosylation. Histidine 267 serves as a coordination point for Fe cation. Lysine 277 is a 2-oxoglutarate binding site.

Belongs to the P4HA family. The cofactor is Fe(2+). L-ascorbate is required as a cofactor. Expressed in epidermal root hair cells (trichoblasts).

It localises to the endoplasmic reticulum membrane. Its subcellular location is the golgi apparatus membrane. It carries out the reaction L-prolyl-[collagen] + 2-oxoglutarate + O2 = trans-4-hydroxy-L-prolyl-[collagen] + succinate + CO2. Its function is as follows. Catalyzes the post-translational formation of 4-hydroxyproline in -Xaa-Pro-Gly- sequences in proline-rich peptide sequences of plant glycoproteins and other proteins. Hydroxyprolines are important constituent of many plant cell wall glycoproteins such as extensins, hydroxyproline-rich glycoproteins, lectins and arabinogalactan proteins. Possesses high affinity for leucine-rich repeat and proline-rich extensins of root cell walls that are essential for root hair development. Hydroxyprolines define the subsequent O-glycosylation sites by arabinosyltransferases which elongate the O-arabinosides on extensins. In Arabidopsis thaliana (Mouse-ear cress), this protein is Prolyl 4-hydroxylase 5.